The sequence spans 94 residues: Large ribosomal subunit protein bL25 (94 aa).

Belongs to the bacterial ribosomal protein bL25 family. Part of the 50S ribosomal subunit; part of the 5S rRNA/L5/L18/L25 subcomplex. Contacts the 5S rRNA. Binds to the 5S rRNA independently of L5 and L18.

This is one of the proteins that binds to the 5S RNA in the ribosome where it forms part of the central protuberance. The polypeptide is Large ribosomal subunit protein bL25 (Serratia proteamaculans (strain 568)).